The sequence spans 133 residues: Phosphoribosyl-AMP cyclohydrolase (133 aa).

Aspartate 82 lines the Mg(2+) pocket. A Zn(2+)-binding site is contributed by cysteine 83. Mg(2+)-binding residues include aspartate 84 and aspartate 86. 2 residues coordinate Zn(2+): cysteine 99 and cysteine 106.

Belongs to the PRA-CH family. As to quaternary structure, homodimer. The cofactor is Mg(2+). Zn(2+) is required as a cofactor.

It localises to the cytoplasm. The enzyme catalyses 1-(5-phospho-beta-D-ribosyl)-5'-AMP + H2O = 1-(5-phospho-beta-D-ribosyl)-5-[(5-phospho-beta-D-ribosylamino)methylideneamino]imidazole-4-carboxamide. It participates in amino-acid biosynthesis; L-histidine biosynthesis; L-histidine from 5-phospho-alpha-D-ribose 1-diphosphate: step 3/9. In terms of biological role, catalyzes the hydrolysis of the adenine ring of phosphoribosyl-AMP. The chain is Phosphoribosyl-AMP cyclohydrolase from Rhodospirillum centenum (strain ATCC 51521 / SW).